An 846-amino-acid chain; its full sequence is Integrin beta-PS (846 aa).

The first 28 residues, 1-28, serve as a signal peptide directing secretion; it reads MILERNRRCQLALLMIAILAAIAGQTDA. At 29 to 777 the chain is on the extracellular side; it reads QKAAKLTAVS…NKECPAKVFM (749 aa). An intrachain disulfide couples cysteine 46 to cysteine 55. N-linked (GlcNAc...) asparagine glycosylation is present at asparagine 72. A VWFA domain is found at 186-419; the sequence is DLYYLMDLSK…ELVKEEYRKI (234 aa). The cysteines at positions 249 and 252 are disulfide-linked. 2 N-linked (GlcNAc...) asparagine glycosylation sites follow: asparagine 266 and asparagine 277. A disulfide bond links cysteine 300 and cysteine 341. Asparagine 403 and asparagine 428 each carry an N-linked (GlcNAc...) asparagine glycan. Disulfide bonds link cysteine 441/cysteine 453, cysteine 473/cysteine 741, cysteine 507/cysteine 530, cysteine 522/cysteine 533, cysteine 535/cysteine 544, cysteine 546/cysteine 579, cysteine 561/cysteine 577, cysteine 571/cysteine 582, cysteine 584/cysteine 599, cysteine 601/cysteine 624, cysteine 606/cysteine 622, cysteine 614/cysteine 627, cysteine 629/cysteine 638, cysteine 640/cysteine 664, cysteine 647/cysteine 662, cysteine 656/cysteine 667, cysteine 669/cysteine 682, cysteine 685/cysteine 688, cysteine 692/cysteine 701, cysteine 698/cysteine 771, and cysteine 719/cysteine 749. 4 consecutive I-EGF domains span residues 507–545, 546–600, 601–639, and 640–683; these read CENPGSIGYQVQANSCSGHGTSMCGICNCDDSYFGNKCE, CSAT…KHCE, CDNFSCERNRNQLCSGPDHGTCECGRCKCKPGWTGSNCG, and CQES…RHCE. Asparagine 557 carries N-linked (GlcNAc...) asparagine glycosylation. N-linked (GlcNAc...) asparagine glycosylation is present at asparagine 603. An N-linked (GlcNAc...) asparagine glycan is attached at asparagine 644. The N-linked (GlcNAc...) asparagine glycan is linked to asparagine 718. A helical membrane pass occupies residues 778–798; that stretch reads LGIVMGVIAAIVLVGLAILLL. Residues 799 to 846 are Cytoplasmic-facing; sequence WKLLTTIHDRREFARFEKERMNAKWDTGENPIYKQATSTFKNPMYAGK. A phosphotyrosine mark is found at tyrosine 831 and tyrosine 843.

This sequence belongs to the integrin beta chain family. Heterodimer of an alpha and a beta subunit. Beta-PS associates with either alpha-PS1, alpha-PS2, alpha-PS3, alpha-PS4 or alpha-PS5. As to expression, in ovaries, strongly expressed in follicle cells. In oocytes, expressed in the forming dorsal appendages (at protein level). Expressed in the embryonic dorsal cuticle, the larval eye and the wing imaginal disk. In testes, detected at the interface between somatic hub cells and cyst stem cells.

Its subcellular location is the cell membrane. It is found in the apical cell membrane. The protein localises to the lateral cell membrane. The protein resides in the basal cell membrane. Integrin alpha-PS1/beta-PS is a receptor for laminin. Integrin alpha-PS2/beta-PS is a receptor for Tig, wb and Ten-m. Contributes to endodermal integrity and adhesion between the midgut epithelium and the surrounding visceral muscle. Essential for migration of the primordial midgut cells and for maintaining, but not establishing, cell polarity in the midgut epithelium. The two beta subunits mediate midgut migration by distinct mechanisms: beta-PS requires rhea/talin and Itgbn does not. Required for rhea/talin correct cellular localization in the midgut. Required for many embryonic (dorsal closure and somatic muscle attachments) and postembryonic developmental processes (attachment between cell layers of imaginal disks, organization of ommatidial arrays and flight muscle development). Involved in the function and/or development of the olfactory system. In the testes, essential for shv-dependent maintenance of somatic hub cells and their localization to the apical tip. Plays a role in timely border cell migration during oogenesis. This is Integrin beta-PS (mys) from Drosophila melanogaster (Fruit fly).